A 104-amino-acid polypeptide reads, in one-letter code: Inner membrane protein YjcH (104 aa).

Topologically, residues 1-24 (MNGTIYQRIEDNAHFRELVEKRQR) are cytoplasmic. A helical transmembrane segment spans residues 25-47 (FATILSIIMLAVYIGFILLIAFA). At 48–61 (PGWLGTPLNPNTSV) the chain is on the periplasmic side. Residues 62-84 (TRGIPIGVGVIVISFVLTGIYIW) form a helical membrane-spanning segment. The Cytoplasmic segment spans residues 85 to 104 (RANGEFDRLNNEVLHEVQAS).

The protein resides in the cell inner membrane. The polypeptide is Inner membrane protein YjcH (yjcH) (Escherichia coli (strain K12)).